The sequence spans 1543 residues: ATP-binding cassette sub-family C member 2 (1543 aa).

Residues 1–26 lie on the Extracellular side of the membrane; sequence MDEFCNSTFWNLSLLKSPEADLPLCF. N-linked (GlcNAc...) asparagine glycosylation is found at Asn-6 and Asn-11. A helical membrane pass occupies residues 27–47; the sequence is EQTVLVWIPLGFLWLLAPWQL. At 48-67 the chain is on the cytoplasmic side; the sequence is YRIYRSRTKRFAITKFYLAK. A helical membrane pass occupies residues 68–88; it reads QVFVVCLLILAAIDLSLALTE. Residues 89–92 lie on the Extracellular side of the membrane; the sequence is DTGQ. The chain crosses the membrane as a helical span at residues 93–113; that stretch reads ATIPPVKYTNPILYLCTWLLV. Over 114–125 the chain is Cytoplasmic; it reads LVIQHCRQCCIQ. Residues 126-146 traverse the membrane as a helical segment; the sequence is KNSWFLSMFWILSLLCGIFQF. Over 147-164 the chain is Extracellular; sequence QTLIRALLQDSKSNMTYS. Residue Asn-160 is glycosylated (N-linked (GlcNAc...) asparagine). A helical membrane pass occupies residues 165-185; sequence CLFFVSYGFQIVILILSAFSE. At 186–311 the chain is on the cytoplasmic side; that stretch reads SSDSTHAPSA…DFPKSWLVKA (126 aa). The disordered stretch occupies residues 260–285; sequence LKKSQQSPEGTSHGLTKKQSQSQDVL. Residues 263–283 show a composition bias toward polar residues; that stretch reads SQQSPEGTSHGLTKKQSQSQD. Residues Ser-279 and Ser-281 each carry the phosphoserine modification. Residues 312–332 form a helical membrane-spanning segment; sequence LFKTFYVVILKSFILKLAHDI. The ABC transmembrane type-1 1 domain maps to 320–603; it reads ILKSFILKLA…LPMVISSVIQ (284 aa). Residues 333–358 lie on the Extracellular side of the membrane; it reads LLFLNPQLLKFLIGFVKDPDSYPWVG. The chain crosses the membrane as a helical span at residues 359–379; that stretch reads YIYAILMFSVTLIQSFFLQCY. The Cytoplasmic segment spans residues 380–435; it reads FQFCFVLGMTVRTTIIASVYKKALTLSNLARRQYTIGETVNLMSVDSQKLMDVTNY. A helical transmembrane segment spans residues 436-456; sequence IHLLWSSVLQIALSIFFLWRE. The Extracellular portion of the chain corresponds to 457 to 459; sequence LGP. The helical transmembrane segment at 460 to 480 threads the bilayer; the sequence is SILAGVGLMVLLVPVNGVLAT. At 481 to 542 the chain is on the cytoplasmic side; that stretch reads KIRKIQVQNM…NLLRFSQLQT (62 aa). Residues 543–563 traverse the membrane as a helical segment; sequence ILIFILHLTPTLVSVITFSVY. Residues 564 to 585 are Extracellular-facing; it reads VLVDSQNVLNAEKAFTSITLFN. A helical transmembrane segment spans residues 586 to 606; it reads ILRFPLAMLPMVISSVIQASV. Topologically, residues 607–969 are cytoplasmic; the sequence is SVDRLEQYLG…VKFSIYLKYL (363 aa). In terms of domain architecture, ABC transporter 1 spans 635 to 859; sequence VQFSEASFTW…KGVFAKNWKT (225 aa). Residue 669–676 coordinates ATP; sequence GTVGSGKS. Phosphoserine is present on Ser-876. The segment at 903-927 is disordered; that stretch reads RENSLRRTLSRSSRSGSRRGKSLKS. Residues 908 to 917 show a composition bias toward low complexity; sequence RRTLSRSSRS. Phosphoserine is present on residues Ser-924 and Ser-928. Residues 970–990 form a helical membrane-spanning segment; that stretch reads QAVGWWSLLFIVIFYVLNYVA. Positions 977–1262 constitute an ABC transmembrane type-1 2 domain; sequence LLFIVIFYVL…LVRMTSEVET (286 aa). The Extracellular segment spans residues 991-1031; it reads FIGTNLWLSAWTSDSEKQNGTDNSPSQRDMRIGVFGALGIA. Asn-1009 is a glycosylation site (N-linked (GlcNAc...) asparagine). A helical membrane pass occupies residues 1032–1052; that stretch reads QGIFLLSSSLWSIYACRNASK. The Cytoplasmic portion of the chain corresponds to 1053–1095; the sequence is TLHRQLLTNILRAPMSFFDTTPTGRIVNRFAGDISTVDDTLPQ. The chain crosses the membrane as a helical span at residues 1096–1116; that stretch reads TLRSWLLCFFGIVSTLVMICM. Ala-1117 is a topological domain (extracellular). A helical transmembrane segment spans residues 1118–1138; the sequence is TPIFIIIIIPLSILYVSVQVF. Topologically, residues 1139-1209 are cytoplasmic; the sequence is YVATSRQLRR…TSNRWLAIRL (71 aa). Residues 1210–1230 form a helical membrane-spanning segment; sequence ELVGNLIVFCSALLLVIYKNS. At 1231 to 1232 the chain is on the extracellular side; sequence LT. Residues 1233–1253 traverse the membrane as a helical segment; the sequence is GDTVGFVLSNALNITQTLNWL. Residues 1254 to 1543 lie on the Cytoplasmic side of the membrane; that stretch reads VRMTSEVETN…GIESVNHTEL (290 aa). The ABC transporter 2 domain occupies 1298 to 1532; it reads IQFNNYQVRY…MGPFYLMAKE (235 aa). 1332-1339 is an ATP binding site; the sequence is GRTGAGKS. Ser-1436 is subject to Phosphoserine.

Belongs to the ABC transporter superfamily. ABCC family. Conjugate transporter (TC 3.A.1.208) subfamily. Expressed in liver.

The protein localises to the apical cell membrane. The catalysed reaction is an S-substituted glutathione(in) + ATP + H2O = an S-substituted glutathione(out) + ADP + phosphate + H(+). The enzyme catalyses taurolithocholate 3-sulfate(in) + ATP + H2O = taurolithocholate 3-sulfate(out) + ADP + phosphate + H(+). It catalyses the reaction ATP + H2O + xenobioticSide 1 = ADP + phosphate + xenobioticSide 2.. It carries out the reaction leukotriene C4(in) + ATP + H2O = leukotriene C4(out) + ADP + phosphate + H(+). The catalysed reaction is 17beta-estradiol 17-O-(beta-D-glucuronate)(in) + ATP + H2O = 17beta-estradiol 17-O-(beta-D-glucuronate)(out) + ADP + phosphate + H(+). The enzyme catalyses (4Z,15Z)-bilirubin IXalpha C8-beta-D-glucuronoside(in) + ATP + H2O = (4Z,15Z)-bilirubin IXalpha C8-beta-D-glucuronoside(out) + ADP + phosphate + H(+). It catalyses the reaction (4Z,15Z)-bilirubin IXalpha C8,C12-beta-D-bisglucuronoside(in) + ATP + H2O = (4Z,15Z)-bilirubin IXalpha C8,C12-beta-D-bisglucuronoside(out) + ADP + phosphate + H(+). Its function is as follows. ATP-dependent transporter of the ATP-binding cassette (ABC) family that binds and hydrolyzes ATP to enable active transport of various substrates including many drugs, toxicants and endogenous compound across cell membranes. Transports a wide variety of conjugated organic anions such as sulfate-, glucuronide- and glutathione (GSH)-conjugates of endo- and xenobiotics substrates. Mediates hepatobiliary excretion of mono- and bis-glucuronidated bilirubin molecules and therefore play an important role in bilirubin detoxification. Mediates also hepatobiliary excretion of others glucuronide conjugates such as 17beta-estradiol 17-glucosiduronic acid and leukotriene C4. Transports sulfated bile salt such as taurolithocholate sulfate. Transports various anticancer drugs, such as anthracycline, vinca alkaloid and methotrexate and HIV-drugs such as protease inhibitors. This chain is ATP-binding cassette sub-family C member 2, found in Mus musculus (Mouse).